The primary structure comprises 1202 residues: Nitric oxide synthase 3 (1202 aa).

The interval 1 to 70 (MGNLKSVGQE…PPDGPKFPRV (70 aa)) is disordered. Gly2 is lipidated: N-myristoyl glycine. S-palmitoyl cysteine attachment occurs at residues Cys15 and Cys26. Residues 15 to 27 (CGLGLGLGLGLCG) are compositionally biased toward gly residues. Pro residues predominate over residues 33–65 (SPAPEPSQAPVPPSPTRPAPDHSPPLTRPPDGP). Zn(2+) is bound by residues Cys93 and Cys98. The segment at 97–485 (RCLGSLVFPR…PDPWKGSAAK (389 aa)) is interaction with NOSIP. Ser101 lines the (6R)-L-erythro-5,6,7,8-tetrahydrobiopterin pocket. Cys183 serves as a coordination point for heme b. L-arginine contacts are provided by Gln246, Trp355, Tyr356, and Glu360. Positions 445, 446, and 459 each coordinate (6R)-L-erythro-5,6,7,8-tetrahydrobiopterin. Tyr474 lines the heme b pocket. The segment at 489 to 509 (ITRKKTFKEVANAVKISASLM) is calmodulin-binding. At Thr494 the chain carries Phosphothreonine; by AMPK. A Flavodoxin-like domain is found at 519 to 702 (ATILYGSETG…AFRGWAQAAF (184 aa)). FMN-binding residues include Ser525, Glu526, Thr527, Arg529, Ser571, and Thr572. A phosphoserine mark is found at Ser614, Ser632, and Ser637. Residues Ser653, Cys660, Glu686, and Gln690 each contribute to the FMN site. The region spanning 755–1001 (RKMFQATILS…IRGAPSFRLP (247 aa)) is the FAD-binding FR-type domain. Arg775 provides a ligand contact to NADP(+). His797 serves as a coordination point for FAD. The tract at residues 817–843 (EDPPPSTEPVAVEQLEKGSPGGPPPGW) is disordered. Ser835 is subject to Phosphoserine. FAD contacts are provided by Arg937, Tyr939, Ser940, Thr955, Ala957, Tyr961, Val974, Cys975, and Ser976. NADP(+) contacts are provided by Thr1015, Arg1048, Ser1077, Arg1078, Lys1084, Tyr1086, and Gln1088. A Phosphothreonine modification is found at Thr1174. Position 1176 is a phosphoserine; by AMPK (Ser1176). Ser1178 is subject to Phosphoserine.

Belongs to the NOS family. Homodimer. Interacts with NOSIP and NOSTRIN. Interacts with HSP90AB1. Forms a complex with ASL, ASS1 and SLC7A1; the complex regulates cell-autonomous L-arginine synthesis and citrulline recycling while channeling extracellular L-arginine to nitric oxide synthesis pathway. It depends on heme b as a cofactor. FAD is required as a cofactor. Requires FMN as cofactor. The cofactor is (6R)-L-erythro-5,6,7,8-tetrahydrobiopterin. Post-translationally, phosphorylation by AMPK at Ser-1176 in the presence of Ca(2+)-calmodulin (CaM) activates activity. In absence of Ca(2+)-calmodulin, AMPK also phosphorylates Thr-494, resulting in inhibition of activity. In terms of tissue distribution, expressed constitutively by vascular endothelium. Detected in alveolar and serosal epithelial cells as well as in endothelial cells in one day old rat. In adult lung, detected in rare endothelial cells.

Its subcellular location is the membrane. The protein localises to the caveola. The protein resides in the cytoplasm. It localises to the cytoskeleton. It is found in the golgi apparatus. Its subcellular location is the cell membrane. It catalyses the reaction 2 L-arginine + 3 NADPH + 4 O2 + H(+) = 2 L-citrulline + 2 nitric oxide + 3 NADP(+) + 4 H2O. With respect to regulation, stimulated by calcium/calmodulin. Inhibited by NOSIP and NOSTRIN. In terms of biological role, produces nitric oxide (NO) which is implicated in vascular smooth muscle relaxation through a cGMP-mediated signal transduction pathway. NO mediates vascular endothelial growth factor (VEGF)-induced angiogenesis in coronary vessels and promotes blood clotting through the activation of platelets. This Rattus norvegicus (Rat) protein is Nitric oxide synthase 3.